We begin with the raw amino-acid sequence, 458 residues long: Protein unc-93 homolog A (458 aa).

5 consecutive transmembrane segments (helical) span residues 8–28, 42–62, 69–89, 90–110, and 140–160; these read VLVV…LQNL, TLST…PILI, WTIV…FHAN, WYTL…LWSA, and IFFL…SLVF. N190 carries an N-linked (GlcNAc...) asparagine glycan. A run of 7 helical transmembrane segments spans residues 202-222, 258-275, 286-306, 321-341, 345-365, 390-410, and 412-432; these read TLLG…AVFL, LCLL…QEFL, CALG…MTAL, AALY…FLLW, TNQL…DAVW, LGEA…CVST, and LYIL…VEYL.

Belongs to the unc-93 family.

The protein resides in the cell membrane. In Mus musculus (Mouse), this protein is Protein unc-93 homolog A (Unc93a).